The chain runs to 163 residues: Phosphopantetheine adenylyltransferase (163 aa).

A substrate-binding site is contributed by Thr-10. ATP is bound by residues 10–11 (TF) and His-18. Positions 42, 74, and 88 each coordinate substrate. Residues 89-91 (GLR), Glu-99, and 124-130 (NSFISST) each bind ATP.

This sequence belongs to the bacterial CoaD family. Homohexamer. It depends on Mg(2+) as a cofactor.

It is found in the cytoplasm. The enzyme catalyses (R)-4'-phosphopantetheine + ATP + H(+) = 3'-dephospho-CoA + diphosphate. It functions in the pathway cofactor biosynthesis; coenzyme A biosynthesis; CoA from (R)-pantothenate: step 4/5. Functionally, reversibly transfers an adenylyl group from ATP to 4'-phosphopantetheine, yielding dephospho-CoA (dPCoA) and pyrophosphate. The sequence is that of Phosphopantetheine adenylyltransferase from Shewanella putrefaciens (strain CN-32 / ATCC BAA-453).